Consider the following 208-residue polypeptide: Negative modulator of initiation of replication (208 aa).

An interaction with DNA region spans residues 115–116 (AV).

The protein belongs to the SeqA family. In terms of assembly, homodimer. Polymerizes to form helical filaments.

It is found in the cytoplasm. In terms of biological role, negative regulator of replication initiation, which contributes to regulation of DNA replication and ensures that replication initiation occurs exactly once per chromosome per cell cycle. Binds to pairs of hemimethylated GATC sequences in the oriC region, thus preventing assembly of replication proteins and re-initiation at newly replicated origins. Repression is relieved when the region becomes fully methylated. The sequence is that of Negative modulator of initiation of replication from Shewanella frigidimarina (strain NCIMB 400).